Reading from the N-terminus, the 359-residue chain is Acyl-CoA desaturase (359 aa).

At 1 to 72 the chain is on the cytoplasmic side; that stretch reads MPAHLLQEEI…EGPKPKLEYV (72 aa). Residues 73 to 93 traverse the membrane as a helical segment; sequence WRNIILMGLLHLGALYGITLI. Asn-75 contacts substrate. Residues 94–97 lie on the Lumenal side of the membrane; sequence PTCK. Residues 98-118 form a helical membrane-spanning segment; the sequence is IYTFLWVLFYYVISALGITAG. Over 119–217 the chain is Cytoplasmic; sequence VHRLWSHRTY…EKLVMFQRRY (99 aa). The Fe cation site is built by His-120 and His-125. The Histidine box-1 signature appears at 120–125; sequence HRLWSH. Substrate contacts are provided by Asn-148, Arg-155, and Asp-156. Residues His-157, His-160, and His-161 each coordinate Fe cation. The Histidine box-2 signature appears at 157–161; the sequence is HRAHH. The substrate site is built by Arg-188 and Lys-189. A Phosphoserine modification is found at Ser-203. A helical membrane pass occupies residues 218–237; the sequence is YKPGVLLLCFILPTLVPWYL. The Lumenal portion of the chain corresponds to 238–241; sequence WGES. The chain crosses the membrane as a helical span at residues 242 to 263; it reads FQNSLFFATFLRYAVVLNATWL. Trp-262 provides a ligand contact to substrate. Over 264–359 the chain is Cytoplasmic; the sequence is VNSAAHMYGY…RTGEESYKSG (96 aa). Residues His-269, His-298, His-301, and His-302 each contribute to the Fe cation site. The Histidine box-3 signature appears at 298–302; it reads HNYHH.

Belongs to the fatty acid desaturase type 1 family. Fe(2+) is required as a cofactor.

The protein localises to the endoplasmic reticulum membrane. The enzyme catalyses octadecanoyl-CoA + 2 Fe(II)-[cytochrome b5] + O2 + 2 H(+) = (9Z)-octadecenoyl-CoA + 2 Fe(III)-[cytochrome b5] + 2 H2O. Stearoyl-CoA desaturase that utilizes O(2) and electrons from reduced cytochrome b5 to introduce the first double bond into saturated fatty acyl-CoA substrates. Catalyzes the insertion of a cis double bond at the delta-9 position into fatty acyl-CoA substrates including palmitoyl-CoA and stearoyl-CoA. Gives rise to a mixture of 16:1 and 18:1 unsaturated fatty acids. Plays an important role in lipid biosynthesis. Plays an important role in regulating the expression of genes that are involved in lipogenesis and in regulating mitochondrial fatty acid oxidation. Plays an important role in body energy homeostasis. Contributes to the biosynthesis of membrane phospholipids, cholesterol esters and triglycerides. The polypeptide is Acyl-CoA desaturase (SCD) (Ovis aries (Sheep)).